Here is a 163-residue protein sequence, read N- to C-terminus: Lipoprotein signal peptidase (163 aa).

3 helical membrane passes run 11-31 (ILIA…IATT), 63-83 (KMTF…YFFI), and 88-108 (YNLF…GNFI). Catalysis depends on residues Asp118 and Asp136. A helical transmembrane segment spans residues 131 to 151 (IFNIADSSLTIGVILIIIALL).

This sequence belongs to the peptidase A8 family.

It localises to the cell membrane. The catalysed reaction is Release of signal peptides from bacterial membrane prolipoproteins. Hydrolyzes -Xaa-Yaa-Zaa-|-(S,diacylglyceryl)Cys-, in which Xaa is hydrophobic (preferably Leu), and Yaa (Ala or Ser) and Zaa (Gly or Ala) have small, neutral side chains.. It functions in the pathway protein modification; lipoprotein biosynthesis (signal peptide cleavage). This protein specifically catalyzes the removal of signal peptides from prolipoproteins. In Staphylococcus aureus (strain MRSA252), this protein is Lipoprotein signal peptidase.